The chain runs to 295 residues: MHAKIMDALGSLPSDLASAVKPIFEDANFDATLSPEQFTTLLSTTHMTDSELRVALLPIAAAYSVAPISKFFVGAIVRGESGRLYFGANMEFVGASLSQTIHAEQSAISHAWIKGETGITDITINYSPCGHCRQFMNELTTAKTLIVQLPEREEQTLQQYLPESFGPADLNITDALLGKIDHGMTIKETDEFVAIACKAANGSHAPYTKNYSGVALKATDGKVFTGKYAENAAFNPSLPPLQVALVNMNMAGYALTEIAEAALVEKADSTISHLSDTQTTLEALNPDIPLTYVAA.

2 CMP/dCMP-type deaminase domains span residues 48–168 (TDSE…FGPA) and 187–295 (KETD…YVAA). A substrate-binding site is contributed by 89–91 (NME). His-102 serves as a coordination point for Zn(2+). Glu-104 serves as the catalytic Proton donor. Residues Cys-129 and Cys-132 each contribute to the Zn(2+) site.

This sequence belongs to the cytidine and deoxycytidylate deaminase family. In terms of assembly, homodimer. Zn(2+) serves as cofactor.

The enzyme catalyses cytidine + H2O + H(+) = uridine + NH4(+). It catalyses the reaction 2'-deoxycytidine + H2O + H(+) = 2'-deoxyuridine + NH4(+). Its function is as follows. This enzyme scavenges exogenous and endogenous cytidine and 2'-deoxycytidine for UMP synthesis. In Photobacterium profundum (strain SS9), this protein is Cytidine deaminase.